A 286-amino-acid polypeptide reads, in one-letter code: Aquaporin PIP1-1 (286 aa).

The tract at residues 1–34 (MEGKEEDVRLGANKFSERQPIGTAAQSDKGYKEP) is disordered. Residues 1–54 (MEGKEEDVRLGANKFSERQPIGTAAQSDKGYKEPPPAPLFEPGELTSWSFYRAG) are Cytoplasmic-facing. A helical transmembrane segment spans residues 55 to 75 (IAEFMATFLFLYITILTVMGV). Residues 76 to 88 (VKSNSKCSTVGIQ) are Extracellular-facing. Residues 89–109 (GIAWAFGGMIFALVYCTAGIS) traverse the membrane as a helical segment. The Cytoplasmic portion of the chain corresponds to 110 to 131 (GGHINPAVTFGLFLARKLSLTR). Residues 114 to 116 (NPA) carry the NPA 1 motif. The helical transmembrane segment at 132-152 (ALFYMVMQCLGAICGAGVVKG) threads the bilayer. Topologically, residues 153–174 (YQKGLYESNGGGANVVAPGYTK) are extracellular. Residues 175–195 (GDGLGAEIVGTFILVYTVFSA) traverse the membrane as a helical segment. Residues 196–208 (TDAKRNARDSHVP) are Cytoplasmic-facing. A helical membrane pass occupies residues 209–229 (ILAPLPIGFAVFLVHLATIPI). Residues 230–256 (TGTGINPARSLGAAIIYNKKHAWDDHW) lie on the Extracellular side of the membrane. The NPA 2 motif lies at 235 to 237 (NPA). Residues 257–277 (IFWVGPFIGAALAAIYHQIVI) traverse the membrane as a helical segment. The Cytoplasmic segment spans residues 278–286 (RAIPFKSRP).

This sequence belongs to the MIP/aquaporin (TC 1.A.8) family. PIP (TC 1.A.8.11) subfamily. In terms of tissue distribution, expressed in leaves, roots, stems, flowers and fruits, with highest levels in roots.

It localises to the cell membrane. In terms of biological role, water channel required to facilitate the transport of water across cell membrane; mercury-insensitive. Promotes primary root elongation and root hair formation. Contributes to the tolerance to multiple abiotic stresses including salt (NaCl), cold and water deprivation, by modulating cytosolic K(+)/Na(+) ratio, maintaining osmotic balance, and reducing membrane injury (e.g. oxidative injury). Also regulates the expression of abscisic acid (ABA)-responsive genes during dehydration and salt stresses. The chain is Aquaporin PIP1-1 from Musa acuminata (Banana).